Reading from the N-terminus, the 378-residue chain is Polar flagellin B/D (378 aa).

Coiled-coil stretches lie at residues 103 to 128 and 311 to 340; these read SNSKAERVAIQEEVTALNDELNRIAE and AFQNRFNHAISNLDNINENVNASKSRIKDT.

Belongs to the bacterial flagellin family. As to quaternary structure, heteromer of multiple flagellin subunits including FlaA, FlaB/D, FlaC, FlaE and FlaF.

It localises to the secreted. The protein localises to the bacterial flagellum. In terms of biological role, flagellin is the subunit protein which polymerizes to form the filaments of bacterial flagella. FlaB/D is not essential for polar flagellar synthesis and swimming motility. Homomer of FlaB/D is not able to form a functional filament. The polypeptide is Polar flagellin B/D (flaB) (Vibrio parahaemolyticus serotype O3:K6 (strain RIMD 2210633)).